Consider the following 241-residue polypeptide: Leucyl/phenylalanyl-tRNA--protein transferase (241 aa).

It belongs to the L/F-transferase family.

It is found in the cytoplasm. It catalyses the reaction N-terminal L-lysyl-[protein] + L-leucyl-tRNA(Leu) = N-terminal L-leucyl-L-lysyl-[protein] + tRNA(Leu) + H(+). It carries out the reaction N-terminal L-arginyl-[protein] + L-leucyl-tRNA(Leu) = N-terminal L-leucyl-L-arginyl-[protein] + tRNA(Leu) + H(+). The catalysed reaction is L-phenylalanyl-tRNA(Phe) + an N-terminal L-alpha-aminoacyl-[protein] = an N-terminal L-phenylalanyl-L-alpha-aminoacyl-[protein] + tRNA(Phe). Functionally, functions in the N-end rule pathway of protein degradation where it conjugates Leu, Phe and, less efficiently, Met from aminoacyl-tRNAs to the N-termini of proteins containing an N-terminal arginine or lysine. In Neisseria meningitidis serogroup A / serotype 4A (strain DSM 15465 / Z2491), this protein is Leucyl/phenylalanyl-tRNA--protein transferase.